The chain runs to 421 residues: C2H2 type master regulator of conidiophore development brlA (421 aa).

Positions 228–242 (THSPTTPLRSCSIGT) are enriched in polar residues. The disordered stretch occupies residues 228 to 247 (THSPTTPLRSCSIGTASGPD). C2H2-type zinc fingers lie at residues 309–333 (FKCK…MKSH) and 339–364 (HVCW…TKTH). The segment covering 361 to 370 (TKTHSKRGGR) has biased composition (basic residues). A disordered region spans residues 361 to 421 (TKTHSKRGGR…REYSVDGLDD (61 aa)).

It is found in the nucleus. Functionally, brlA, abaA and wetA are pivotal regulators of conidiophore development and conidium maturation. They act individually and together to regulate their own expression and that of numerous other sporulation-specific genes. Binds promoters of target genes at brlA response elements (BREs) containing the conserved sequence 5'-(C/A)(A/G)AGGG(G/A)-3'. The sequence is that of C2H2 type master regulator of conidiophore development brlA from Aspergillus parasiticus (strain ATCC 56775 / NRRL 5862 / SRRC 143 / SU-1).